The primary structure comprises 265 residues: 4-hydroxy-tetrahydrodipicolinate reductase (265 aa).

16–21 contacts NAD(+); sequence GANGKM. Arg-43 is an NADP(+) binding site. NAD(+) contacts are provided by residues 106–108 and 130–133; these read GTT and SENF. His-164 serves as the catalytic Proton donor/acceptor. Position 165 (His-165) interacts with (S)-2,3,4,5-tetrahydrodipicolinate. The active-site Proton donor is the Lys-168. (S)-2,3,4,5-tetrahydrodipicolinate is bound at residue 174–175; it reads AT.

The protein belongs to the DapB family. Homotetramer.

It localises to the cytoplasm. The catalysed reaction is (S)-2,3,4,5-tetrahydrodipicolinate + NAD(+) + H2O = (2S,4S)-4-hydroxy-2,3,4,5-tetrahydrodipicolinate + NADH + H(+). The enzyme catalyses (S)-2,3,4,5-tetrahydrodipicolinate + NADP(+) + H2O = (2S,4S)-4-hydroxy-2,3,4,5-tetrahydrodipicolinate + NADPH + H(+). Its pathway is amino-acid biosynthesis; L-lysine biosynthesis via DAP pathway; (S)-tetrahydrodipicolinate from L-aspartate: step 4/4. Functionally, catalyzes the conversion of 4-hydroxy-tetrahydrodipicolinate (HTPA) to tetrahydrodipicolinate. This is 4-hydroxy-tetrahydrodipicolinate reductase from Wigglesworthia glossinidia brevipalpis.